A 140-amino-acid polypeptide reads, in one-letter code: UPF0299 membrane protein CGSHiGG_01475 (140 aa).

The next 4 helical transmembrane spans lie at 1–21 (MIQK…MLYL), 33–52 (VPGS…TRVI), 60–80 (GASL…VGII), and 92–112 (ILLV…GFLG).

This sequence belongs to the UPF0299 family.

The protein resides in the cell inner membrane. This chain is UPF0299 membrane protein CGSHiGG_01475, found in Haemophilus influenzae (strain PittGG).